We begin with the raw amino-acid sequence, 274 residues long: MLSVAARSGPFAPVLSATSRGVAGALRPLVQATVPATPKPPVLDLKRPFLSRESLSGQAVRRPLVASVGLNVPASVCYSHTDVKVPDFYDYRRLEVLDSTKSSRESSEARKGFSYLVTAVTTVGVAYAAKNAVTQFISSMSASADVLAMAKIEINLSDIPEGKNMAFKWRGKPLFVRHRTQKEIEQEAAVELSQLRDPQHDLDRVKKPEWVILIGICTHLGCVPIANAGDFGGYYCPCHGSHYDVSGRIRLGPAPLNLEVPPYEFTSDDMVVVG.

At 79-103 (SHTDVKVPDFYDYRRLEVLDSTKSS) the chain is on the mitochondrial matrix side. Residues 104–140 (RESSEARKGFSYLVTAVTTVGVAYAAKNAVTQFISSM) form a helical membrane-spanning segment. Residues 141-274 (SASADVLAMA…FTSDDMVVVG (134 aa)) lie on the Mitochondrial intermembrane side of the membrane. Positions 187 to 272 (EAAVELSQLR…YEFTSDDMVV (86 aa)) constitute a Rieske domain. Cys217, His219, Cys236, His239, and Ser241 together coordinate [2Fe-2S] cluster. Cys222 and Cys238 are oxidised to a cystine.

The protein belongs to the Rieske iron-sulfur protein family. As to quaternary structure, component of the ubiquinol-cytochrome c oxidoreductase (cytochrome b-c1 complex, complex III, CIII), a multisubunit enzyme composed of 11 subunits. The complex is composed of 3 respiratory subunits cytochrome b, cytochrome c1 and Rieske protein UQCRFS1, 2 core protein subunits UQCRC1/QCR1 and UQCRC2/QCR2, and 6 low-molecular weight protein subunits UQCRH/QCR6, UQCRB/QCR7, UQCRQ/QCR8, UQCR10/QCR9, UQCR11/QCR10 and subunit 9, the cleavage product of Rieske protein UQCRFS1. The complex exists as an obligatory dimer and forms supercomplexes (SCs) in the inner mitochondrial membrane with NADH-ubiquinone oxidoreductase (complex I, CI) and cytochrome c oxidase (complex IV, CIV), resulting in different assemblies (supercomplex SCI(1)III(2)IV(1) and megacomplex MCI(2)III(2)IV(2)). Incorporation of the Rieske protein UQCRFS1 is the penultimate step in complex III assembly. Interacts with TTC19, which is involved in the clearance of UQCRFS1 fragments. In terms of assembly, component of the ubiquinol-cytochrome c oxidoreductase (cytochrome b-c1 complex, complex III, CIII). Subunit 9 corresponds to the mitochondrial targeting sequence (MTS) of Rieske protein UQCRFS1. It is retained after processing and incorporated inside complex III, where it remains bound to the complex and localizes between the 2 core subunits UQCRC1/QCR1 and UQCRC2/QCR2. The cofactor is [2Fe-2S] cluster. Post-translationally, proteolytic processing is necessary for the correct insertion of UQCRFS1 in the complex III dimer. Several fragments are generated during UQCRFS1 insertion, most probably due to the endogenous matrix-processing peptidase (MPP) activity of the 2 core protein subunits UQCRC1/QCR1 and UQCRC2/QCR2, which are homologous to the 2 mitochondrial-processing peptidase (MPP) subunits beta-MPP and alpha-MPP respectively. The action of the protease is also necessary for the clearance of the UQCRFS1 fragments.

It localises to the mitochondrion inner membrane. The enzyme catalyses a quinol + 2 Fe(III)-[cytochrome c](out) = a quinone + 2 Fe(II)-[cytochrome c](out) + 2 H(+)(out). Functionally, component of the ubiquinol-cytochrome c oxidoreductase, a multisubunit transmembrane complex that is part of the mitochondrial electron transport chain which drives oxidative phosphorylation. The respiratory chain contains 3 multisubunit complexes succinate dehydrogenase (complex II, CII), ubiquinol-cytochrome c oxidoreductase (cytochrome b-c1 complex, complex III, CIII) and cytochrome c oxidase (complex IV, CIV), that cooperate to transfer electrons derived from NADH and succinate to molecular oxygen, creating an electrochemical gradient over the inner membrane that drives transmembrane transport and the ATP synthase. The cytochrome b-c1 complex catalyzes electron transfer from ubiquinol to cytochrome c, linking this redox reaction to translocation of protons across the mitochondrial inner membrane, with protons being carried across the membrane as hydrogens on the quinol. In the process called Q cycle, 2 protons are consumed from the matrix, 4 protons are released into the intermembrane space and 2 electrons are passed to cytochrome c. The Rieske protein is a catalytic core subunit containing a [2Fe-2S] iron-sulfur cluster. It cycles between 2 conformational states during catalysis to transfer electrons from the quinol bound in the Q(0) site in cytochrome b to cytochrome c1. Incorporation of UQCRFS1 is the penultimate step in complex III assembly. In terms of biological role, component of the ubiquinol-cytochrome c oxidoreductase (cytochrome b-c1 complex, complex III, CIII). UQCRFS1 undergoes proteolytic processing once it is incorporated in the complex III dimer. One of the fragments, called subunit 9, corresponds to its mitochondrial targeting sequence (MTS). The proteolytic processing is necessary for the correct insertion of UQCRFS1 in the complex III dimer, but the persistence of UQCRFS1-derived fragments may prevent newly imported UQCRFS1 to be processed and assembled into complex III and is detrimental for the complex III structure and function. The protein is Cytochrome b-c1 complex subunit Rieske, mitochondrial (UQCRFS1) of Theropithecus gelada (Gelada baboon).